A 151-amino-acid polypeptide reads, in one-letter code: Large ribosomal subunit protein uL15 (151 aa).

Residues 1–60 are disordered; it reads MAENSPLKAHNLRPAPGAKTAKTRVGRGEASKGKTAGRGTKGTKARYQVPERFEGGQMPL.

This sequence belongs to the universal ribosomal protein uL15 family. As to quaternary structure, part of the 50S ribosomal subunit.

Functionally, binds to the 23S rRNA. This Streptomyces griseus subsp. griseus (strain JCM 4626 / CBS 651.72 / NBRC 13350 / KCC S-0626 / ISP 5235) protein is Large ribosomal subunit protein uL15.